The sequence spans 425 residues: Kynurenine/alpha-aminoadipate aminotransferase, mitochondrial (425 aa).

The transit peptide at 1–29 (MNYSRFLTATSLARKTSPIRATVEIMSRA) directs the protein to the mitochondrion. Arginine 20 contributes to the substrate binding site. Serine 40 carries the post-translational modification Phosphoserine. The substrate site is built by tyrosine 74 and tyrosine 142. An N6-succinyllysine modification is found at lysine 172. N6-acetyllysine is present on lysine 179. A compositionally biased stretch (basic and acidic residues) spans 179–188 (KPEDSKDPTK). A disordered region spans residues 179-208 (KPEDSKDPTKRTPKFLYTIPNGNNPTGNSL). A compositionally biased stretch (polar residues) spans 198-208 (PNGNNPTGNSL). Asparagine 202 lines the substrate pocket. Lysine 263 carries the N6-(pyridoxal phosphate)lysine; alternate modification. Residues lysine 263 and lysine 339 each carry the N6-acetyllysine; alternate modification. Lysine 263 and lysine 339 each carry N6-succinyllysine; alternate. The residue at position 351 (lysine 351) is an N6-acetyllysine. Position 367 is an N6-acetyllysine; alternate (lysine 367). At lysine 367 the chain carries N6-succinyllysine; alternate. Arginine 399 serves as a coordination point for substrate. Residue lysine 422 is modified to N6-acetyllysine.

It belongs to the class-I pyridoxal-phosphate-dependent aminotransferase family. As to quaternary structure, homodimer. The cofactor is pyridoxal 5'-phosphate. In terms of processing, the N-terminus is blocked.

It localises to the mitochondrion. The enzyme catalyses L-kynurenine + 2-oxoglutarate = kynurenate + L-glutamate + H2O. It carries out the reaction L-2-aminoadipate + 2-oxoglutarate = 2-oxoadipate + L-glutamate. It catalyses the reaction glycine + 2-oxoglutarate = glyoxylate + L-glutamate. The catalysed reaction is L-kynurenine + glyoxylate = kynurenate + glycine + H2O. The enzyme catalyses 3-hydroxy-L-kynurenine + glyoxylate = xanthurenate + glycine + H2O. It carries out the reaction 2-oxohexanoate + L-kynurenine = L-2-aminohexanoate + kynurenate + H2O. It catalyses the reaction 3-phenylpyruvate + L-kynurenine = kynurenate + L-phenylalanine + H2O. The catalysed reaction is 4-methylsulfanyl-2-oxobutanoate + L-kynurenine = kynurenate + L-methionine + H2O. The enzyme catalyses 2-oxo-3-sulfanylpropanoate + L-kynurenine = kynurenate + L-cysteine + H2O. It carries out the reaction indole-3-pyruvate + L-kynurenine = kynurenate + L-tryptophan + H2O. It catalyses the reaction 2-oxopentanoate + L-kynurenine = L-2-aminopentanoate + kynurenate + H2O. The catalysed reaction is 4-methyl-2-oxopentanoate + L-kynurenine = kynurenate + L-leucine + H2O. The enzyme catalyses glyoxylate + L-methionine = 4-methylsulfanyl-2-oxobutanoate + glycine. It carries out the reaction L-2-aminoadipate + glyoxylate = 2-oxoadipate + glycine. It catalyses the reaction L-tyrosine + glyoxylate = 3-(4-hydroxyphenyl)pyruvate + glycine. The catalysed reaction is glyoxylate + L-phenylalanine = 3-phenylpyruvate + glycine. The enzyme catalyses L-tryptophan + glyoxylate = indole-3-pyruvate + glycine. It carries out the reaction L-leucine + glyoxylate = 4-methyl-2-oxopentanoate + glycine. It catalyses the reaction 2-oxobutanoate + L-kynurenine = (2S)-2-aminobutanoate + kynurenate + H2O. The catalysed reaction is 2-oxoadipate + L-kynurenine = L-2-aminoadipate + kynurenate + H2O. The enzyme catalyses 2-oxoadipate + L-kynurenine = 4-(2-aminophenyl)-2,4-dioxobutanoate + L-2-aminoadipate. Its pathway is amino-acid degradation; L-lysine degradation via saccharopine pathway; glutaryl-CoA from L-lysine: step 4/6. In terms of biological role, transaminase with broad substrate specificity. Has transaminase activity towards aminoadipate, kynurenine, methionine and glutamate. Shows activity also towards tryptophan, aspartate and hydroxykynurenine. Accepts a variety of oxo-acids as amino-group acceptors, with a preference for 2-oxoglutarate, 2-oxocaproic acid, phenylpyruvate and alpha-oxo-gamma-methiol butyric acid. Can also use glyoxylate as amino-group acceptor (in vitro). The chain is Kynurenine/alpha-aminoadipate aminotransferase, mitochondrial from Rattus norvegicus (Rat).